The chain runs to 156 residues: Ribosome maturation factor RimP (156 aa).

It belongs to the RimP family.

The protein localises to the cytoplasm. Its function is as follows. Required for maturation of 30S ribosomal subunits. This is Ribosome maturation factor RimP from Bacillus subtilis (strain 168).